Here is a 1004-residue protein sequence, read N- to C-terminus: Kinesin-like protein KIN-14R (1004 aa).

3 disordered regions span residues Met-1–Asp-21, Pro-61–Asp-90, and Glu-110–Gly-169. The segment covering Val-63–Asn-75 has biased composition (acidic residues). Positions Pro-115–Ser-125 are enriched in pro residues. Coiled coils occupy residues Cys-189–Ser-230 and Leu-266–Lys-338. The Kinesin motor domain occupies Asn-345 to Ile-671. Gly-428–Thr-435 provides a ligand contact to ATP. Residues Met-691–Leu-742 are a coiled coil. Disordered regions lie at residues Asp-759–Glu-791 and Ser-946–Asn-1004. Residues Arg-948 to Thr-958 are compositionally biased toward low complexity. Polar residues predominate over residues Asn-995–Asn-1004.

Belongs to the TRAFAC class myosin-kinesin ATPase superfamily. Kinesin family. KIN-14 subfamily.

The protein is Kinesin-like protein KIN-14R of Oryza sativa subsp. japonica (Rice).